A 258-amino-acid chain; its full sequence is Ditrans,polycis-undecaprenyl-diphosphate synthase ((2E,6E)-farnesyl-diphosphate specific) (258 aa).

Asp-24 is an active-site residue. Asp-24 is a binding site for Mg(2+). Substrate-binding positions include 25-28 (GNGR), Trp-29, Arg-37, His-41, and 69-71 (SSE). The Proton acceptor role is filled by Asn-72. Residues Trp-73, Arg-75, Arg-192, and 198–200 (RIS) contribute to the substrate site. A Mg(2+)-binding site is contributed by Glu-211.

This sequence belongs to the UPP synthase family. In terms of assembly, homodimer. It depends on Mg(2+) as a cofactor.

It carries out the reaction 8 isopentenyl diphosphate + (2E,6E)-farnesyl diphosphate = di-trans,octa-cis-undecaprenyl diphosphate + 8 diphosphate. In terms of biological role, catalyzes the sequential condensation of isopentenyl diphosphate (IPP) with (2E,6E)-farnesyl diphosphate (E,E-FPP) to yield (2Z,6Z,10Z,14Z,18Z,22Z,26Z,30Z,34E,38E)-undecaprenyl diphosphate (di-trans,octa-cis-UPP). UPP is the precursor of glycosyl carrier lipid in the biosynthesis of bacterial cell wall polysaccharide components such as peptidoglycan and lipopolysaccharide. This chain is Ditrans,polycis-undecaprenyl-diphosphate synthase ((2E,6E)-farnesyl-diphosphate specific), found in Xanthomonas oryzae pv. oryzae (strain KACC10331 / KXO85).